Consider the following 60-residue polypeptide: LKCHKLVPPFWKTCPEGKNLCYKMYMVATPMLPVKRGCIDVCPKDSALVKYMCCNTDKCN.

4 disulfide bridges follow: Cys-3/Cys-21, Cys-14/Cys-38, Cys-42/Cys-53, and Cys-54/Cys-59.

It belongs to the three-finger toxin family. Short-chain subfamily. Type IA cytotoxin sub-subfamily. As to quaternary structure, monomer in solution; Homodimer and oligomer in the presence of negatively charged lipids forming a pore with a size ranging between 20 and 30 Angstroms. In terms of tissue distribution, expressed by the venom gland.

It is found in the secreted. Its subcellular location is the target cell membrane. In terms of biological role, shows cytolytic activity on many different cells by forming pore in lipid membranes. In vivo, increases heart rate or kills the animal by cardiac arrest. In addition, it binds to heparin with high affinity, interacts with Kv channel-interacting protein 1 (KCNIP1) in a calcium-independent manner, and binds to integrin alpha-V/beta-3 (ITGAV/ITGB3) with moderate affinity. This is Cytotoxin 2 from Naja annulifera (Banded Egyptian cobra).